The sequence spans 117 residues: Hydrogenase maturation factor HypA (117 aa).

His2 is a Ni(2+) binding site. 4 residues coordinate Zn(2+): Cys73, Cys76, Cys89, and Cys92.

It belongs to the HypA/HybF family.

Its function is as follows. Involved in the maturation of [NiFe] hydrogenases. Required for nickel insertion into the metal center of the hydrogenase. The chain is Hydrogenase maturation factor HypA from Shewanella baltica (strain OS185).